Reading from the N-terminus, the 278-residue chain is Rhomboid protease GlpG (278 aa).

The next 6 helical transmembrane spans lie at 95-115 (GPLT…MQIL), 143-163 (AFLH…WYLG), 170-190 (LGSG…GWAQ), 192-212 (LFSG…MGYC), 224-241 (LMLP…LVAG), and 245-267 (ILGM…LMAF). Residue serine 202 is the Nucleophile of the active site. Residue histidine 255 is part of the active site.

It belongs to the peptidase S54 family.

It localises to the cell inner membrane. It carries out the reaction Cleaves type-1 transmembrane domains using a catalytic dyad composed of serine and histidine that are contributed by different transmembrane domains.. Its function is as follows. Rhomboid-type serine protease that catalyzes intramembrane proteolysis. The sequence is that of Rhomboid protease GlpG from Serratia proteamaculans (strain 568).